Consider the following 1392-residue polypeptide: DNA-directed RNA polymerase subunit beta (1392 aa).

It belongs to the RNA polymerase beta chain family. The RNAP catalytic core consists of 2 alpha, 1 beta, 1 beta' and 1 omega subunit. When a sigma factor is associated with the core the holoenzyme is formed, which can initiate transcription.

The enzyme catalyses RNA(n) + a ribonucleoside 5'-triphosphate = RNA(n+1) + diphosphate. In terms of biological role, DNA-dependent RNA polymerase catalyzes the transcription of DNA into RNA using the four ribonucleoside triphosphates as substrates. In Neisseria meningitidis serogroup B (strain ATCC BAA-335 / MC58), this protein is DNA-directed RNA polymerase subunit beta.